We begin with the raw amino-acid sequence, 386 residues long: PqqA peptide cyclase (386 aa).

Residues 9–228 form the Radical SAM core domain; it reads SKPPLWLLAE…RQYIDQHHLK (220 aa). 3 residues coordinate [4Fe-4S] cluster: Cys23, Cys27, and Cys30.

It belongs to the radical SAM superfamily. PqqE family. In terms of assembly, interacts with PqqD. The interaction is necessary for activity of PqqE. Requires [4Fe-4S] cluster as cofactor.

The catalysed reaction is [PQQ precursor protein] + S-adenosyl-L-methionine = E-Y cross-linked-[PQQ precursor protein] + 5'-deoxyadenosine + L-methionine + H(+). Its pathway is cofactor biosynthesis; pyrroloquinoline quinone biosynthesis. Functionally, catalyzes the cross-linking of a glutamate residue and a tyrosine residue in the PqqA protein as part of the biosynthesis of pyrroloquinoline quinone (PQQ). This Acinetobacter baylyi (strain ATCC 33305 / BD413 / ADP1) protein is PqqA peptide cyclase.